The sequence spans 464 residues: tRNA modification GTPase MnmE (464 aa).

(6S)-5-formyl-5,6,7,8-tetrahydrofolate is bound by residues Arg27, Glu90, and Lys129. Residues 222-384 enclose the TrmE-type G domain; the sequence is GVALVLAGSV…LYDKIRALIS (163 aa). GTP contacts are provided by residues 232–237, 251–257, and 276–279; these read NAGKSS, SSYPGTT, and DTAG. The Mg(2+) site is built by Ser236 and Thr257. Lys464 is a binding site for (6S)-5-formyl-5,6,7,8-tetrahydrofolate.

It belongs to the TRAFAC class TrmE-Era-EngA-EngB-Septin-like GTPase superfamily. TrmE GTPase family. In terms of assembly, homodimer. Heterotetramer of two MnmE and two MnmG subunits. K(+) serves as cofactor.

It localises to the cytoplasm. Its function is as follows. Exhibits a very high intrinsic GTPase hydrolysis rate. Involved in the addition of a carboxymethylaminomethyl (cmnm) group at the wobble position (U34) of certain tRNAs, forming tRNA-cmnm(5)s(2)U34. The protein is tRNA modification GTPase MnmE of Borreliella burgdorferi (strain ATCC 35210 / DSM 4680 / CIP 102532 / B31) (Borrelia burgdorferi).